A 64-amino-acid chain; its full sequence is Small ribosomal subunit protein bS21 (64 aa).

A disordered region spans residues 42 to 64 (KKEKEKAAAKKRNKYNKRRSFYY). Residues 50-64 (AKKRNKYNKRRSFYY) show a composition bias toward basic residues.

This sequence belongs to the bacterial ribosomal protein bS21 family.

In Malacoplasma penetrans (strain HF-2) (Mycoplasma penetrans), this protein is Small ribosomal subunit protein bS21.